Consider the following 396-residue polypeptide: Acetate kinase (396 aa).

Mg(2+) is bound at residue Asn-8. Residue Lys-15 coordinates ATP. Position 89 (Arg-89) interacts with substrate. The active-site Proton donor/acceptor is Asp-146. ATP-binding positions include 206–210 (HIGNG), 283–285 (DMR), and 331–335 (GVGEN). A Mg(2+)-binding site is contributed by Glu-383.

This sequence belongs to the acetokinase family. In terms of assembly, homodimer. The cofactor is Mg(2+). Mn(2+) is required as a cofactor.

The protein localises to the cytoplasm. It catalyses the reaction acetate + ATP = acetyl phosphate + ADP. It functions in the pathway metabolic intermediate biosynthesis; acetyl-CoA biosynthesis; acetyl-CoA from acetate: step 1/2. Catalyzes the formation of acetyl phosphate from acetate and ATP. Can also catalyze the reverse reaction. The sequence is that of Acetate kinase from Streptococcus pneumoniae (strain 70585).